The following is a 230-amino-acid chain: Orotidine 5'-phosphate decarboxylase (230 aa).

Substrate-binding positions include aspartate 10, lysine 32, 59–68 (DLKFHDIPRT), threonine 116, arginine 177, glutamine 186, glycine 206, and arginine 207. Residue lysine 61 is the Proton donor of the active site.

The protein belongs to the OMP decarboxylase family. Type 1 subfamily. As to quaternary structure, homodimer.

It carries out the reaction orotidine 5'-phosphate + H(+) = UMP + CO2. The protein operates within pyrimidine metabolism; UMP biosynthesis via de novo pathway; UMP from orotate: step 2/2. Functionally, catalyzes the decarboxylation of orotidine 5'-monophosphate (OMP) to uridine 5'-monophosphate (UMP). The sequence is that of Orotidine 5'-phosphate decarboxylase from Methylacidiphilum infernorum (isolate V4) (Methylokorus infernorum (strain V4)).